Reading from the N-terminus, the 101-residue chain is TrfB transcriptional repressor protein (101 aa).

The segment at residues 37-56 (QATFATSLGLTRGAVSQAVH) is a DNA-binding region (H-T-H motif).

In terms of biological role, in conjunction with KorB, inhibits the transcription of kilA, trfA and korAB operons. In conjunction with KorC is responsible for the negative control of kilC and kilE operons. This is TrfB transcriptional repressor protein (trfB) from Escherichia coli.